The following is an 802-amino-acid chain: Aldehyde dehydrogenase family 16 member A1 (802 aa).

It belongs to the aldehyde dehydrogenase family. Interacts with SPG21.

This is Aldehyde dehydrogenase family 16 member A1 (Aldh16a1) from Mus musculus (Mouse).